The following is a 744-amino-acid chain: Potassium-transporting ATPase ATP-binding subunit (744 aa).

4 helical membrane-spanning segments follow: residues 80–100, 108–128, 265–285, and 310–330; these read PVMF…VMAL, AGFI…ANVA, LALT…TVTL, and VLVA…LSAI. D363 acts as the 4-aspartylphosphate intermediate in catalysis. ATP-binding positions include D400, E404, 435-442, and K457; that span reads FSAQTRMS. D580 and D584 together coordinate Mg(2+). The next 3 helical transmembrane spans lie at 650–670, 678–698, and 724–744; these read FAII…LNVM, AVMS…PLAL, and LLLP…MGWV.

The protein belongs to the cation transport ATPase (P-type) (TC 3.A.3) family. Type IA subfamily. As to quaternary structure, the system is composed of three essential subunits: KdpA, KdpB and KdpC.

The protein resides in the cell inner membrane. The catalysed reaction is K(+)(out) + ATP + H2O = K(+)(in) + ADP + phosphate + H(+). Functionally, part of the high-affinity ATP-driven potassium transport (or Kdp) system, which catalyzes the hydrolysis of ATP coupled with the electrogenic transport of potassium into the cytoplasm. This subunit is responsible for energy coupling to the transport system and for the release of the potassium ions to the cytoplasm. This chain is Potassium-transporting ATPase ATP-binding subunit, found in Ralstonia nicotianae (strain ATCC BAA-1114 / GMI1000) (Ralstonia solanacearum).